We begin with the raw amino-acid sequence, 429 residues long: Histidine--tRNA ligase (429 aa).

It belongs to the class-II aminoacyl-tRNA synthetase family. As to quaternary structure, homodimer.

Its subcellular location is the cytoplasm. The enzyme catalyses tRNA(His) + L-histidine + ATP = L-histidyl-tRNA(His) + AMP + diphosphate + H(+). This is Histidine--tRNA ligase from Streptococcus pneumoniae (strain 70585).